Here is a 305-residue protein sequence, read N- to C-terminus: NDP-polyphosphate phosphotransferase 1 (305 aa).

Belongs to the polyphosphate kinase 2 (PPK2) family. Class I subfamily.

The enzyme catalyses [phosphate](n) + ATP = [phosphate](n+1) + ADP. It carries out the reaction [phosphate](n) + CTP = [phosphate](n+1) + CDP. It catalyses the reaction [phosphate](n) + GTP = [phosphate](n+1) + GDP. The catalysed reaction is [phosphate](n) + UTP = [phosphate](n+1) + UDP. Its activity is regulated as follows. Shows little dependence on metals. Its function is as follows. Uses inorganic polyphosphate (polyP) as a donor to convert NDP to NTP. PolyP hydrolysis is slightly faster with GDP, but it can also use ADP, CDP and UDP. This is NDP-polyphosphate phosphotransferase 1 from Ruegeria pomeroyi (strain ATCC 700808 / DSM 15171 / DSS-3) (Silicibacter pomeroyi).